The chain runs to 143 residues: MRLLGLDVGSRTVGVAVSDPMGWTAQGVEIIRINEDEKEFGLARLGEIIKEKQAKGVVVGLPKNMNNSEGPRAEAARQYAQMVEDQFNLPTDFQDERLTTVQAERMLVEEADVSRKKRKQVIDKIAAEFILQNYLDANGPLTK.

The protein belongs to the YqgF nuclease family.

Its subcellular location is the cytoplasm. Functionally, could be a nuclease involved in processing of the 5'-end of pre-16S rRNA. In Leuconostoc citreum (strain KM20), this protein is Putative pre-16S rRNA nuclease.